We begin with the raw amino-acid sequence, 395 residues long: Tryptophan synthase beta chain (395 aa).

Position 86 is an N6-(pyridoxal phosphate)lysine (lysine 86).

This sequence belongs to the TrpB family. As to quaternary structure, tetramer of two alpha and two beta chains. Pyridoxal 5'-phosphate is required as a cofactor.

It catalyses the reaction (1S,2R)-1-C-(indol-3-yl)glycerol 3-phosphate + L-serine = D-glyceraldehyde 3-phosphate + L-tryptophan + H2O. It functions in the pathway amino-acid biosynthesis; L-tryptophan biosynthesis; L-tryptophan from chorismate: step 5/5. In terms of biological role, the beta subunit is responsible for the synthesis of L-tryptophan from indole and L-serine. This chain is Tryptophan synthase beta chain, found in Psychromonas ingrahamii (strain DSM 17664 / CCUG 51855 / 37).